Here is a 1300-residue protein sequence, read N- to C-terminus: Insulin receptor-related protein (1300 aa).

The first 26 residues, 1–26 (MARPKLWPWGILLLVSLLSAGFNLDT), serve as a signal peptide directing secretion. N47 carries an N-linked (GlcNAc...) asparagine glycan. 9 cysteine pairs are disulfide-bonded: C214/C222, C216/C228, C229/C237, C233/C246, C249/C258, C262/C274, C280/C300, C304/C317, and C320/C324. A glycan (N-linked (GlcNAc...) asparagine) is linked at N311. N411, N492, N528, N616, N634, N756, N885, and N898 each carry an N-linked (GlcNAc...) asparagine glycan. 2 Fibronectin type-III domains span residues 483–603 (QTRT…TLPA) and 607–707 (VPQD…AQEA). A disulfide bridge connects residues C657 and C864. The segment at 740-762 (DAGRHRRAIGSPRPGGNSSDFEI) is disordered. The Extracellular segment spans residues 747–921 (AIGSPRPGGN…PEEEDSGGLH (175 aa)). In terms of domain architecture, Fibronectin type-III 3 spans 818–912 (IPGKLSWEAA…DSVAFYIPGP (95 aa)). Residues 922 to 943 (ILLTVTPAGLMLLIILAALGFF) traverse the membrane as a helical segment. Topologically, residues 944–1300 (YSRKRNGTLY…CSLQNGGPEH (357 aa)) are cytoplasmic. Positions 979 to 1254 (ISIIRELGQG…SIQKELRPSF (276 aa)) constitute a Protein kinase domain. ATP is bound by residues 985 to 993 (LGQGSFGMV) and K1013. The Proton acceptor role is filled by D1115. Residues Y1145 and Y1146 each carry the phosphotyrosine; by autocatalysis modification. The tract at residues 1270–1300 (GLQPTTDAESSSPPTSKGASDCSLQNGGPEH) is disordered. Residues 1272 to 1300 (QPTTDAESSSPPTSKGASDCSLQNGGPEH) show a composition bias toward polar residues.

The protein belongs to the protein kinase superfamily. Tyr protein kinase family. Insulin receptor subfamily. As to quaternary structure, probable tetramer of 2 alpha and 2 beta chains linked by disulfide bonds. The alpha chains contribute to the formation of the ligand-binding domain, while the beta chains carry the kinase domain. Autophosphorylated on tyrosine residues between pH 7.9 and pH 10.5.

The protein localises to the membrane. It carries out the reaction L-tyrosyl-[protein] + ATP = O-phospho-L-tyrosyl-[protein] + ADP + H(+). Receptor with tyrosine-protein kinase activity. Functions as a pH sensing receptor which is activated by increased extracellular pH. Activates an intracellular signaling pathway that involves IRS1 and AKT1/PKB. This Cavia porcellus (Guinea pig) protein is Insulin receptor-related protein (INSRR).